A 487-amino-acid chain; its full sequence is Aspartyl/glutamyl-tRNA(Asn/Gln) amidotransferase subunit B (487 aa).

This sequence belongs to the GatB/GatE family. GatB subfamily. In terms of assembly, heterotrimer of A, B and C subunits.

The catalysed reaction is L-glutamyl-tRNA(Gln) + L-glutamine + ATP + H2O = L-glutaminyl-tRNA(Gln) + L-glutamate + ADP + phosphate + H(+). It carries out the reaction L-aspartyl-tRNA(Asn) + L-glutamine + ATP + H2O = L-asparaginyl-tRNA(Asn) + L-glutamate + ADP + phosphate + 2 H(+). Its function is as follows. Allows the formation of correctly charged Asn-tRNA(Asn) or Gln-tRNA(Gln) through the transamidation of misacylated Asp-tRNA(Asn) or Glu-tRNA(Gln) in organisms which lack either or both of asparaginyl-tRNA or glutaminyl-tRNA synthetases. The reaction takes place in the presence of glutamine and ATP through an activated phospho-Asp-tRNA(Asn) or phospho-Glu-tRNA(Gln). The sequence is that of Aspartyl/glutamyl-tRNA(Asn/Gln) amidotransferase subunit B from Acidiphilium cryptum (strain JF-5).